The following is a 543-amino-acid chain: Chaperonin GroEL 1 (543 aa).

ATP contacts are provided by residues 30-33, Lys-51, 87-91, Gly-415, and Asp-496; these read TLGP and DGTTT.

It belongs to the chaperonin (HSP60) family. In terms of assembly, forms a cylinder of 14 subunits composed of two heptameric rings stacked back-to-back. Interacts with the co-chaperonin GroES.

It localises to the cytoplasm. The enzyme catalyses ATP + H2O + a folded polypeptide = ADP + phosphate + an unfolded polypeptide.. Its function is as follows. Together with its co-chaperonin GroES, plays an essential role in assisting protein folding. The GroEL-GroES system forms a nano-cage that allows encapsulation of the non-native substrate proteins and provides a physical environment optimized to promote and accelerate protein folding. The chain is Chaperonin GroEL 1 from Mesorhizobium japonicum (strain LMG 29417 / CECT 9101 / MAFF 303099) (Mesorhizobium loti (strain MAFF 303099)).